The primary structure comprises 452 residues: Ribosomal protein uS12 methylthiotransferase RimO (452 aa).

Positions 3-118 (GKIGFVSLGC…VMQVIHLHLP (116 aa)) constitute an MTTase N-terminal domain. Positions 12, 48, 77, 149, 153, and 156 each coordinate [4Fe-4S] cluster. Residues 135–382 (LTPKHYAYLK…AKAEEISVGR (248 aa)) form the Radical SAM core domain. The TRAM domain maps to 384-452 (AKKIGKRLQV…SQGHDLIAET (69 aa)).

It belongs to the methylthiotransferase family. RimO subfamily. [4Fe-4S] cluster serves as cofactor.

It localises to the cytoplasm. It carries out the reaction L-aspartate(89)-[ribosomal protein uS12]-hydrogen + (sulfur carrier)-SH + AH2 + 2 S-adenosyl-L-methionine = 3-methylsulfanyl-L-aspartate(89)-[ribosomal protein uS12]-hydrogen + (sulfur carrier)-H + 5'-deoxyadenosine + L-methionine + A + S-adenosyl-L-homocysteine + 2 H(+). Its function is as follows. Catalyzes the methylthiolation of an aspartic acid residue of ribosomal protein uS12. The protein is Ribosomal protein uS12 methylthiotransferase RimO of Polynucleobacter necessarius subsp. necessarius (strain STIR1).